We begin with the raw amino-acid sequence, 2334 residues long: MKKGSERRLSKAKMPLSSHFPGPSSLRSSMRSRSLSPLIGSETQPLHPGGQWPAQAELTDESTVPLEPQQRKGAESYVGVRYITEALIKKLTKQDNLALVKSLNLSLSKDGGKKFRYIENLEKCVKLEVLNLSYNLIVKIEKVDKLLRLRELNLSYNKISKIEGLENMCNLQKLNLAGNEIEHIPVWFAKKLKSLRVLNLKGNKISSLQDVSKLKPLQDLTSLVLIDNPVVALPHYLQFIIFHLRSLESLEGQPVTTQDRQEAFERFSLEEIERLEKDLEKKTVETEELKNKQTKFLEEIKNQDKLNKSLKEEAMLQKQSCEELESDLSTKKELLKQKTVELTRACQKQYELEQELAFYKIDAKFEPLNYYPSEYAEIDKYPDESPYIGKSRYKRNMFATETYIVSDAQAVQIRKMVPEGGQLRHEHTPPRVQAPPDLQLEDTEKKISAAQTRLSELHHEIETAEQKVLRATQEFKQLEEAIQQKKISEAEKDLLLKQLSGRLQHLNRLRQEALDLEIQMEKQRKEIAEKHEEINTVQLATDSLDPKDPKHSHMKAQKRGKEQQLDIMNRQYTQLESRLDEILCRIAKETEEIKDLEQQLTDGQIAANEALKKDLEGVISGLQEYLGTIKGQATQAQNECRKLQDEKETLLQRLTEVQQEKEELELIAMDAENMRKELAELESALQEQHEVNASLQQAQGDLSAYETELETQLKLKDAETSQLKQELEKLLRRTQLEQSVLQTELEKERESLRDALGKAQSSEEKQQENNELRTQLKQLQDDNSLLKKQLKEFQNHLNHVVDGLIHPEEVAARVDELRKRLKLGAGEMRIHSPSDVLGKSLADLQKQFSEILARSQWEKEEAQVRERKLHEEMALQQEKLANGQEEFRQACERALEARIKFDKRQHNARIQQLENEIHYLQENLKSMEKIQGLTDLQLQEADEEKERILAQLQELEKKKKREDARSQEQFLGLDEELKSLKKAVAASDKLAAAELTIAKDQLKSLHGTVVRINQERAEELQEAERFSREAMQAAKDLSRAEAEIELLQHLLREREGQFRDEMENADLGAKGANSQLLEIEALNEAMAKQRAEITRLRDVLNLTGAGTKGGIENVLEEIAELRHAVSAQNEYISSMADPFRRQGWWYFMPPAPSSKVSSHSSQATKDSGLGLKYTASTPLRKPQPGQQEEKDSSGPLPASGYWVYSPIRSTLHKSFSKREDADSGGDSQEESGLDDQEEPPFVPPPGYIMYTVLPDGSPVPQGVALYAPSPPLPNSSHPLTPGTVVYGPPPAGAPIIYGPPPANFAVPLVPAGVQHCNIPEHHNLENEVSRLEDIMQHLKSKQREERRQKASTQHSEEEVDGLHRDIDDLLQEKKELELEVEELHRTIERHQQRKDFIDGHVENLMTELEIEKSLKHHEDIVDEIECLEKTLLKRRSELREADRLLAEAENELACTKEKTKSAVEKFTDAKRNLLQTESDAEALEKRAQETALNLVKAEQQLRLLQADAEDLEQHKIKQEEILKEINKVVAAKDADFQCLNEKKEKLTEELQSLQRDIKAAQHSEDHHLQVLRESETLLQAKRAELETLKSQVTSQQQELAVLDSELGHRREELLLLQDSLAQAKADLQEALTLGETEVAEKCSHIREVKSLLEELSFQKGELNVHISEKKTQLALIQQEMEKEEKNLQVVLQQLSRHKTELKNVADILQLETSELQGLKLQHDQKVVELEKAQVDVLEEKLELENLQQATQQQRRELERQRQLLERDRRETERVRAESQALQSCVECLSKEKEDLQGQCESWEKKSSHAQRVLAATEESNKMEQSNLGKLELSVRKLRQELEQLSQDKLALHSEVAEVQQQLQGKQEAINSLQEELDSTQDHLDLAKQDLIHTTKCQNELLNEQTQLQEDISKWMARLESCQKETETKEQQVQQLQDEIRESKLRLDQQEMMFQKLQKEREREEQKFEAGKVTLEQQQRQLEKELTDQKSRLKQLLTDVSAAEGRLGTLQEEERRIEGLERMLSQAKQQLSEREQQLMAKSGELLALQKEADDMRADFSLLRNQFLTERKKAEKQVAGLKEALKIQRSQLEKNLLEQKQENSCMQKEMATIELVAQDNHERARRLMKELSQMQQEYLELKKQVANQKDLERRQMEVSDAMRTLKSEVKDEIRTSLRNLNQFLPELPADLASILERNENLRELESLKENFPFTTKERIFEEKSNFPQVHIMDEHWRGEALRQRLRRHEDQLKAQLRHCMSKQAEVLIKGKQQTEGTLHSLRRQVDALGELVTSTSTDSASSPSLPSLVEDSQHGHSQSSFQVLQVPLEEPNSYRH.

Positions Met1–Gln70 are disordered. The segment covering Pro21–Leu38 has biased composition (low complexity). LRR repeat units follow at residues Lys126 to Leu147, Arg148 to Cys169, Asn170 to Lys191, and Ser194 to Lys215. The LRRCT domain maps to Asn228–Arg266. 2 coiled-coil regions span residues Glu265–Thr343 and Asp437–Val800. Disordered stretches follow at residues Asp542 to Glu562 and Ser751 to Glu771. Phosphoserine is present on Ser832. Positions Glu858–Leu1102 form a coiled coil. 3 disordered regions span residues Ser1154–Ala1198, Lys1213–Pro1245, and Leu1338–Asp1360. Residues Ser1227–Glu1238 are compositionally biased toward acidic residues. Positions Glu1320–Asp2169 form a coiled coil. A Phosphoserine modification is found at Ser1478. Residues Met1951–Arg2121 are required for centrosome localization. Positions Gln1988–His2334 are sufficient for interaction with HOOK2. The segment covering Thr2291–Val2307 has biased composition (low complexity). The tract at residues Thr2291 to His2334 is disordered.

As to quaternary structure, interacts with HOOK2. Interacts with EXOC6 and SNAPIN. Associates with the exocyst complex. As to expression, highly expressed in liver.

Its subcellular location is the cytoplasm. The protein resides in the cytoskeleton. It is found in the microtubule organizing center. It localises to the centrosome. The protein localises to the midbody. Its subcellular location is the midbody ring. Involved in cell cycle progression and cytokinesis. During the late steps of cytokinesis, anchors exocyst and SNARE complexes at the midbody, thereby allowing secretory vesicle-mediated abscission. The protein is Centriolin (Cntrl) of Mus musculus (Mouse).